Reading from the N-terminus, the 107-residue chain is U1-lycotoxin-Ls1i (107 aa).

An N-terminal signal peptide occupies residues 1–20 (MMKVLVVVALLVTLISYSSS). Positions 21–41 (EGIDDLEADELLSLMANEQTR) are excised as a propeptide. 4 disulfide bridges follow: Cys44-Cys59, Cys51-Cys68, Cys58-Cys86, and Cys70-Cys84.

Belongs to the neurotoxin 19 (CSTX) family. 04 (U1-Lctx) subfamily. Expressed by the venom gland.

The protein resides in the secreted. In Lycosa singoriensis (Wolf spider), this protein is U1-lycotoxin-Ls1i.